A 1191-amino-acid chain; its full sequence is MDANDFPRLFYTSMPSSSTSNHRIDRLSSSSSSTFRRDDFRRHSTTTSSEKFSTISIGESVKLEEENGEIPEKFVQEEDTVVKTEETRVSDCDFSLTFYTAHVTSSSMLSRGDSSSINNKTFTPDDHYSNPSDKRREVPSIRSTSSNSSSFGGHVAFVDEPSEENQRQQQQYQQHQFQLPTLLVTSTPSTVFDQNDDDVFTSPYHPPNRQYSSSSEMSGLSFQLQSGIHKKSIAVEGNEIALRDLRNEAFQFVKEIYPEKKCGSLEDYILLYKHDLRSINILQLITTSSDVTDGTLVEIVIGSCPQNERIVVHPHTLFVHSYKVPTFCDFCGELLFGLVKQGLKCFGCGLNYHKRCASKIPNNCNGSKQRRPSAIPLSPSNSNILNLNERRQSRRDSCLEALDAARPSSTLGGAATPNIFITSDDCGDPVGGNFLQMPRKDRSCSWSGRPLWMEIAEATRVKIQVPHTFQVHSYKLPTVCQHCKKLLKGLLRQGMQCRGENETEKLQNGAVAKYCKYNCHKKCSEHVAKDCSGNTKASQFFLGTADDGVSEDRDDDLSLRSGSGGHKKAQNTPSAPLQGSEGSGSPGGAVVSFAQGLSNAPDDDVISSESANIPLMRVVMSKKQTKRKNNKLLKEGWIVHYTDQQNMRKKHYWRLDTKGITMYQDENTTRYYKEIPLNEILGVMTSSPEKSSEYLFEIRTGACVYFVYSSLTDEELYNIIHASPCIARKPSTVSSTDSGYLGSSGASSSCVRSREGSTVSSTITVDRTRRGGSTTSTENSEAESESSYSSFASIASTASKYLGRAADCLVLMTKRNGWSDAGSPADEKSSGSLDAQSWTTAIQSALMPVTPQSSVVGGKRVDKLKVPTEGETGHLGAKIQTEQEFSQLYQIFAEEVLGSGQFGTVYGGIHRRNGQHVAVKLIDKLKFPPNKEDLLRAEVQILEQVDHPGVVHFMQMLETTDRIFVVMEKLKGDMLEMILSSEKGRLSERTTQFLVAQILEALRYLHHQNIVHCDLKPENILLNSNSDFPQVKLCDFGFARIIGEKSFRRSVVGTPAYLAPEVLRNKGFNRSLDMWSVGVIVYVSLSGTFPFNEDEDINDQIQNAEFMYPPSPWKEISENAIEFINGLLQVKMSKRYTVAKAQSHIWMQNYTIWSDLRVLEKAVGQRFVTHESDDSRWHAYEKEHNVTPVYV.

Disordered stretches follow at residues 11 to 48 (YTSM…TTTS) and 108 to 155 (MLSR…GGHV). Basic and acidic residues predominate over residues 123–139 (TPDDHYSNPSDKRREVP). The segment covering 140-150 (SIRSTSSNSSS) has biased composition (low complexity). 2 Phorbol-ester/DAG-type zinc fingers span residues 314-364 (PHTL…PNNC) and 466-531 (PHTF…AKDC). The tract at residues 549–594 (VSEDRDDDLSLRSGSGGHKKAQNTPSAPLQGSEGSGSPGGAVVSFA) is disordered. The PH domain maps to 632 to 713 (LLKEGWIVHY…VYFVYSSLTD (82 aa)). A disordered region spans residues 730–786 (PSTVSSTDSGYLGSSGASSSCVRSREGSTVSSTITVDRTRRGGSTTSTENSEAESES). The span at 738-751 (SGYLGSSGASSSCV) shows a compositional bias: low complexity. The span at 756-765 (GSTVSSTITV) shows a compositional bias: polar residues. Residues 773–786 (STTSTENSEAESES) are compositionally biased toward low complexity. A Protein kinase domain is found at 891-1147 (IFAEEVLGSG…VAKAQSHIWM (257 aa)). ATP contacts are provided by residues 897 to 905 (LGSGQFGTV) and Lys-920. The Proton acceptor role is filled by Asp-1014. Phosphoserine is present on residues Ser-1046 and Ser-1050.

The protein belongs to the protein kinase superfamily. CAMK Ser/Thr protein kinase family. PKD subfamily. The cofactor is Mg(2+). Post-translationally, phosphorylation on Ser-1046 is the dominant regulator of catalysis, phosphorylation on Ser-1050 has a lesser effect. Prolonged phosphorylation results in ubiquitination and degradation.

The protein localises to the cytoplasm. The protein resides in the membrane. It carries out the reaction L-seryl-[protein] + ATP = O-phospho-L-seryl-[protein] + ADP + H(+). The catalysed reaction is L-threonyl-[protein] + ATP = O-phospho-L-threonyl-[protein] + ADP + H(+). With respect to regulation, activated by DAG and phorbol esters. Phorbol-ester/DAG-type domain 1 binds phorbol ester with low affinity. Phorbol-ester/DAG-type domain 2 binds phorbol ester with high affinity and targets the kinase to the cell periphery, enabling phosphorylation and activation by colocalized tpa-1. Both domains 1 and 2 appear to bind DAG with equal affinity so may contribute equally to translocation and activation. Its function is as follows. Converts transient diacylglycerol (DAG) signals into prolonged physiological effects, downstream of PKC. Acts in the intestine to regulate both innate immunity by promoting activation of pmk-1 and also stress response and life span by acting as an upstream, negative regulator of the daf-16 transcription factor. The polypeptide is Serine/threonine-protein kinase dkf-2 (Caenorhabditis briggsae).